A 608-amino-acid polypeptide reads, in one-letter code: Serine/threonine-protein kinase ROP17 (608 aa).

The first 21 residues, 1-21 (MELVLCFVIITISGVIRESSA), serve as a signal peptide directing secretion. Asn76 carries an N-linked (GlcNAc...) asparagine glycan. The region spanning 283–579 (LKKRGFLGGG…QQALEQFSLL (297 aa)) is the Protein kinase domain. ATP is bound by residues 289 to 297 (LGGGGFGLV) and Lys312. Residue Asp436 is the Proton acceptor of the active site.

This sequence belongs to the protein kinase superfamily. Ser/Thr protein kinase family. As to quaternary structure, interacts with ROP5; interaction with ROP5 does not affect kinase activity. Interacts with human BCL2; the interaction probably promotes BCL2 phosphorylation and degradation.

The protein localises to the secreted. The protein resides in the cytoplasmic vesicle. Its subcellular location is the secretory vesicle. It localises to the rhoptry. It is found in the parasitophorous vacuole membrane. The catalysed reaction is L-threonyl-[protein] + ATP = O-phospho-L-threonyl-[protein] + ADP + H(+). It carries out the reaction L-seryl-[protein] + ATP = O-phospho-L-seryl-[protein] + ADP + H(+). In terms of biological role, protein kinase. Virulence factor. Promotes migration of Toxoplasma-infected macrophages through collagen matrix, facilitating parasite transport through tissues and systemic dissemination. Plays a role in the translocation of dense granule effectors, such as GRA16 and GRA24, across the parasitophorous vacuole membrane in Toxoplasma-infected host cells. Phosphorylates mouse IRGB6 (TGTP1/TGTP2), an immunity-related GTPase (IRG) that protects mice from infection by certain intracellular pathogens; the phosphorylation leads to the disassembly of IRGB6 polymers into monomers and dimers. May modulate gene expression in human cells. Promotes autophagy in human cells via modulation of the BCL2-BECN1 pathway. The polypeptide is Serine/threonine-protein kinase ROP17 (Toxoplasma gondii).